The primary structure comprises 269 residues: Signal recognition particle receptor subunit beta (269 aa).

The helical transmembrane segment at 35–55 (LLSVAVAVLAVLLTLVFWKFI) threads the bilayer. GTP-binding positions include 69–77 (GLCDSGKTL) and 90–93 (TQTS). A Phosphoserine modification is found at S110. G118 provides a ligand contact to GTP. A Phosphothreonine modification is found at T212. A246 lines the GTP pocket.

It belongs to the SRP receptor beta subunit family. In terms of assembly, heterodimer with SRPRA.

The protein resides in the endoplasmic reticulum membrane. Its function is as follows. Component of the signal recognition particle (SRP) complex receptor (SR). Ensures, in conjunction with the SRP complex, the correct targeting of the nascent secretory proteins to the endoplasmic reticulum membrane system. May mediate the membrane association of SR. The sequence is that of Signal recognition particle receptor subunit beta (Srprb) from Rattus norvegicus (Rat).